Here is a 220-residue protein sequence, read N- to C-terminus: Adenylate kinase (220 aa).

10–15 (GAGKGT) lines the ATP pocket. An NMP region spans residues 30-59 (STGDMLRAAVKAGTPLGLKAKEVMDGGNLV). Residues T31, R36, 57-59 (NLV), 85-88 (GFPR), and Q92 contribute to the AMP site. The tract at residues 122-159 (GRRVHPASGRTYHIRFNPPQTAGMDDETGEPLVQRADD) is LID. ATP-binding positions include R123 and 132–133 (TY). 2 residues coordinate AMP: R156 and R167. G205 provides a ligand contact to ATP.

It belongs to the adenylate kinase family. In terms of assembly, monomer.

It is found in the cytoplasm. The catalysed reaction is AMP + ATP = 2 ADP. It participates in purine metabolism; AMP biosynthesis via salvage pathway; AMP from ADP: step 1/1. Functionally, catalyzes the reversible transfer of the terminal phosphate group between ATP and AMP. Plays an important role in cellular energy homeostasis and in adenine nucleotide metabolism. This Chlorobium luteolum (strain DSM 273 / BCRC 81028 / 2530) (Pelodictyon luteolum) protein is Adenylate kinase.